The sequence spans 633 residues: Probable potassium transport system protein Kup (633 aa).

12 helical membrane-spanning segments follow: residues 21–41 (LAVG…LYAF), 61–81 (LVSL…VLFL), 107–127 (TAVL…DAMI), 145–165 (PTLS…LFAI), 176–196 (FFGP…IMHI), 219–239 (GFLG…AEAL), 255–275 (WFVL…ALVL), 293–313 (ALLP…QAVI), 345–365 (IFLP…VLSF), 371–391 (LATA…IMAF), 402–422 (LPMA…FLGA), and 427–447 (IHDG…IMWT).

This sequence belongs to the HAK/KUP transporter (TC 2.A.72) family.

Its subcellular location is the cell inner membrane. It catalyses the reaction K(+)(in) + H(+)(in) = K(+)(out) + H(+)(out). Functionally, transport of potassium into the cell. Likely operates as a K(+):H(+) symporter. This Rhizobium rhizogenes (strain K84 / ATCC BAA-868) (Agrobacterium radiobacter) protein is Probable potassium transport system protein Kup.